Consider the following 446-residue polypeptide: Transcription factor Dp-2 (446 aa).

The residue at position 2 (Thr2) is an N-acetylthreonine. At Ser24 the chain carries Phosphoserine. Residues 60–82 (PQMIISTPQRLTSSGSVLIGSPY) are interaction with CEBPA. The Nuclear localization signal motif lies at 103–118 (GDRKRARKFIDSDFSE). A Phosphoserine modification is found at Ser122. A DNA-binding region spans residues 129–210 (GKGLRHFSMK…KKEIKWIGLP (82 aa)). A DEF box motif is present at residues 176–210 (DQKNIRRRVYDALNVLMAMNIISKEKKEIKWIGLP). The interval 219-292 (NLEIEKQRRI…RKTVIDCSIS (74 aa)) is dimerization. The interval 229–261 (ERIKQKRAQLQELLLQQIAFKNLVQRNRQNEQQ) is DCB1. The interval 274 to 330 (LPFIIINTSRKTVIDCSISSDKFEYLFNFDNTFEIHDDIEVLKRMGMSFGLESGKCS) is DCB2. Residues 409 to 419 (SHQSSSAASHC) show a composition bias toward low complexity. The interval 409–446 (SHQSSSAASHCSESRGETPCSFNDEDEEDDEEDSSSPE) is disordered. The segment covering 431-446 (NDEDEEDDEEDSSSPE) has biased composition (acidic residues).

Belongs to the E2F/DP family. In terms of assembly, component of the DRTF1/E2F transcription factor complex. Forms heterodimers with E2F family members. The complex can interact with hypophosphorylated retinoblastoma protein RB1 and related proteins (RBL1 and RBL2) that inhibit the E2F transactivation domain. During the cell cycle, RB becomes phosphorylated in mid-to-late G1 phase, detaches from the DRTF1/E2F complex rendering E2F transcriptionally active. Viral oncoproteins, notably E1A, T-antigen and HPV E7, are capable of sequestering RB protein, thus releasing the active complex. Interacts with GMCL. Component of the DREAM complex (also named LINC complex) at least composed of E2F4, E2F5, LIN9, LIN37, LIN52, LIN54, MYBL1, MYBL2, RBL1, RBL2, RBBP4, TFDP1 and TFDP2. The complex exists in quiescent cells where it represses cell cycle-dependent genes. It dissociates in S phase when LIN9, LIN37, LIN52 and LIN54 form a subcomplex that binds to MYBL2. The complex TFDP2:E2F1 interacts with CEBPA; the interaction prevents CEBPA binding to target genes promoters and represses its transcriptional activity. Post-translationally, ser-24 is probably phosphorylated by CDK2. In terms of tissue distribution, high levels in heart and skeletal muscle. Also found in placenta, kidney, brain, lung and liver. The presence as well as the abundance of the different transcripts appear to vary significantly in different tissues and cell lines.

The protein resides in the nucleus. In terms of biological role, can stimulate E2F-dependent transcription. Binds DNA cooperatively with E2F family members through the E2 recognition site, 5'-TTTC[CG]CGC-3', found in the promoter region of a number of genes whose products are involved in cell cycle regulation or in DNA replication. The TFDP2:E2F complex functions in the control of cell-cycle progression from G1 to S phase. The E2F1:DP complex appears to mediate both cell proliferation and apoptosis. Blocks adipocyte differentiation by repressing CEBPA binding to its target gene promoters. In Homo sapiens (Human), this protein is Transcription factor Dp-2 (TFDP2).